The chain runs to 163 residues: Ubiquitin-like protein 1-ribosomal protein eS31 fusion protein (163 aa).

The region spanning 1 to 70 is the Ubiquitin-like domain; that stretch reads MVFVKTLHRT…IYVNLELLGG (70 aa). Glycine 70 participates in a covalent cross-link: Glycyl lysine isopeptide (Gly-Lys) (interchain with K-? in acceptor proteins). The C4-type zinc-finger motif lies at 115 to 138; the sequence is CQQPSCGGGVFMAQHANRHYCGRC.

The protein in the N-terminal section; belongs to the ubiquitin family. In the C-terminal section; belongs to the eukaryotic ribosomal protein eS31 family.

This chain is Ubiquitin-like protein 1-ribosomal protein eS31 fusion protein, found in Caenorhabditis elegans.